Reading from the N-terminus, the 624-residue chain is Chaperone protein DnaK (624 aa).

T174 carries the post-translational modification Phosphothreonine; by autocatalysis. Disordered regions lie at residues 470 to 504 (ITIK…KEEV) and 577 to 624 (NGGA…DPDK). The span at 481–504 (EEIKKMQKDAEEHAEEDKKRKEEV) shows a compositional bias: basic and acidic residues. Over residues 577-605 (NGGAQGAAGQAGPQGPQNGGQPNNDNGSD) the composition is skewed to low complexity. The segment covering 615–624 (GDFHKVDPDK) has biased composition (basic and acidic residues).

The protein belongs to the heat shock protein 70 family.

In terms of biological role, acts as a chaperone. The protein is Chaperone protein DnaK of Lactobacillus johnsonii (strain CNCM I-12250 / La1 / NCC 533).